The sequence spans 154 residues: ATP synthase subunit b', chloroplastic (154 aa).

Residues 22-42 (GTLPLIAIQFLILMFLLNILL) form a helical membrane-spanning segment.

This sequence belongs to the ATPase B chain family. In terms of assembly, F-type ATPases have 2 components, F(1) - the catalytic core - and F(0) - the membrane proton channel. F(1) has five subunits: alpha(3), beta(3), gamma(1), delta(1), epsilon(1). F(0) has four main subunits: a(1), b(1), b'(1) and c(10-14). The alpha and beta chains form an alternating ring which encloses part of the gamma chain. F(1) is attached to F(0) by a central stalk formed by the gamma and epsilon chains, while a peripheral stalk is formed by the delta, b and b' chains.

It is found in the plastid. The protein resides in the chloroplast thylakoid membrane. Its function is as follows. F(1)F(0) ATP synthase produces ATP from ADP in the presence of a proton or sodium gradient. F-type ATPases consist of two structural domains, F(1) containing the extramembraneous catalytic core and F(0) containing the membrane proton channel, linked together by a central stalk and a peripheral stalk. During catalysis, ATP synthesis in the catalytic domain of F(1) is coupled via a rotary mechanism of the central stalk subunits to proton translocation. Functionally, component of the F(0) channel, it forms part of the peripheral stalk, linking F(1) to F(0). The b'-subunit is a diverged and duplicated form of b found in plants and photosynthetic bacteria. The chain is ATP synthase subunit b', chloroplastic from Vaucheria litorea (Yellow-green alga).